A 553-amino-acid chain; its full sequence is Dihydroxy-acid dehydratase (553 aa).

Residue Cys-49 participates in [2Fe-2S] cluster binding. Asp-81 lines the Mg(2+) pocket. Cys-122 provides a ligand contact to [2Fe-2S] cluster. Positions 123 and 124 each coordinate Mg(2+). Lys-124 is modified (N6-carboxylysine). Position 194 (Cys-194) interacts with [2Fe-2S] cluster. Glu-444 is a Mg(2+) binding site. Ser-470 serves as the catalytic Proton acceptor.

It belongs to the IlvD/Edd family. In terms of assembly, homodimer. [2Fe-2S] cluster is required as a cofactor. It depends on Mg(2+) as a cofactor.

The enzyme catalyses (2R)-2,3-dihydroxy-3-methylbutanoate = 3-methyl-2-oxobutanoate + H2O. It carries out the reaction (2R,3R)-2,3-dihydroxy-3-methylpentanoate = (S)-3-methyl-2-oxopentanoate + H2O. It functions in the pathway amino-acid biosynthesis; L-isoleucine biosynthesis; L-isoleucine from 2-oxobutanoate: step 3/4. Its pathway is amino-acid biosynthesis; L-valine biosynthesis; L-valine from pyruvate: step 3/4. Its function is as follows. Functions in the biosynthesis of branched-chain amino acids. Catalyzes the dehydration of (2R,3R)-2,3-dihydroxy-3-methylpentanoate (2,3-dihydroxy-3-methylvalerate) into 2-oxo-3-methylpentanoate (2-oxo-3-methylvalerate) and of (2R)-2,3-dihydroxy-3-methylbutanoate (2,3-dihydroxyisovalerate) into 2-oxo-3-methylbutanoate (2-oxoisovalerate), the penultimate precursor to L-isoleucine and L-valine, respectively. This chain is Dihydroxy-acid dehydratase, found in Aeropyrum pernix (strain ATCC 700893 / DSM 11879 / JCM 9820 / NBRC 100138 / K1).